The primary structure comprises 404 residues: Ribosomal RNA large subunit methyltransferase F (404 aa).

Basic residues-rich tracts occupy residues 1-10 (MTKHSQKQNR) and 18-29 (QTRRKKPAGKLK). Disordered regions lie at residues 1-54 (MTKH…HERN), 156-177 (GTRQ…QRYK), and 289-308 (RAAK…PDAN). A compositionally biased stretch (basic and acidic residues) spans 30-54 (AKSEAKLDTRGKPETTEKKGLHERN). Residues 157–172 (TRQNVPYASKPESSAP) are compositionally biased toward polar residues.

Belongs to the methyltransferase superfamily. METTL16/RlmF family.

It is found in the cytoplasm. It catalyses the reaction adenosine(1618) in 23S rRNA + S-adenosyl-L-methionine = N(6)-methyladenosine(1618) in 23S rRNA + S-adenosyl-L-homocysteine + H(+). Its function is as follows. Specifically methylates the adenine in position 1618 of 23S rRNA. This chain is Ribosomal RNA large subunit methyltransferase F, found in Shewanella sediminis (strain HAW-EB3).